Consider the following 304-residue polypeptide: Coenzyme PQQ synthesis protein B (304 aa).

Belongs to the PqqB family.

The protein operates within cofactor biosynthesis; pyrroloquinoline quinone biosynthesis. Functionally, may be involved in the transport of PQQ or its precursor to the periplasm. In Gluconobacter oxydans (strain 621H) (Gluconobacter suboxydans), this protein is Coenzyme PQQ synthesis protein B.